The chain runs to 4377 residues: E3 ubiquitin-protein ligase HUWE1 (4377 aa).

2 positions are modified to phosphoserine: Ser-648 and Ser-649. 3 disordered regions span residues 706–758 (KADG…VVGT), 978–1001 (DEKA…AGSM), and 1018–1038 (TLAP…KSKI). Residues 725-735 (ASSEDEEEEEV) are compositionally biased toward acidic residues. A compositionally biased stretch (polar residues) spans 737-756 (AMQSFNSAQQNETEPNQQVV). Residue Ser-740 is modified to Phosphoserine. Ser-1084 is modified (phosphoserine). Positions 1291–1302 (LSKEKEGSRGEE) are enriched in basic and acidic residues. The segment at 1291 to 1320 (LSKEKEGSRGEEEAGQEEGGSRREPQVNQQ) is disordered. A UBA domain is found at 1316 to 1355 (QVNQQQLQQLMDMGFTREHAMEALLNTSTMEQATEYLLTH). 4 positions are modified to phosphoserine: Ser-1368, Ser-1370, Ser-1382, and Ser-1395. The UIM domain occupies 1370-1389 (SEEDQMMRAIAMSLGQDIPM). Residues 1396-1415 (PEEVACRKEEEERKAREKQE) are disordered. The WWE domain maps to 1603–1680 (RAQMTKYLQS…ETGNRRPVML (78 aa)). The interval 1690-1733 (KNSKSSNGQELEKTLEESKETDIKHKENKGNDIPLALESTNTEK) is disordered. Residues 1699-1719 (ELEKTLEESKETDIKHKENKG) are compositionally biased toward basic and acidic residues. At Ser-1907 the chain carries Phosphoserine. Disordered stretches follow at residues 2019-2065 (APAE…SKPL), 2262-2343 (SLFG…QEMQ), and 2355-2479 (LLER…ASPL). The segment covering 2022–2033 (ETSTTGTSQGEA) has biased composition (polar residues). A Phosphothreonine modification is found at Thr-2035. Residues 2037–2057 (EETREGKKDKEGDRTSEEGKQ) are compositionally biased toward basic and acidic residues. Low complexity-rich tracts occupy residues 2262–2271 (SLFGSKSASS) and 2278–2291 (DAQG…SHQQ). Phosphoserine is present on Ser-2266. Lys-2267 carries the post-translational modification N6-acetyllysine. 2 stretches are compositionally biased toward acidic residues: residues 2295–2306 (EPGEAEVQEEDH) and 2314–2325 (ADGDIMDGEAET). Phosphoserine occurs at positions 2362, 2365, and 2391. Polar residues predominate over residues 2388 to 2398 (SNLSQASTLQA). Residues 2408-2472 (DPEDEEEHTQ…SEMELDEDYP (65 aa)) show a composition bias toward acidic residues. Phosphoserine occurs at positions 2527, 2532, and 2535. Thr-2554 is modified (phosphothreonine). Phosphoserine occurs at positions 2584, 2595, and 2619. Residues 2704-2716 (IIDKGKEDKENRD) are compositionally biased toward basic and acidic residues. 3 disordered regions span residues 2704-2970 (IIDK…GVDP), 2991-3012 (IRPP…VGNP), and 3036-3059 (QQRA…MDPV). The span at 2717 to 2736 (QSAQCTVTKTNDSTEQNVSD) shows a compositional bias: polar residues. Over residues 2738 to 2756 (TPMPDSYPTTPSSTDAPTS) the composition is skewed to low complexity. Thr-2751 is subject to Phosphothreonine. Polar residues-rich tracts occupy residues 2818–2835 (AETT…TSLS), 2847–2864 (AVSS…SLAS), and 2877–2890 (AGSS…SSTP). Ser-2826, Ser-2833, Ser-2835, Ser-2861, Ser-2887, and Ser-2888 each carry phosphoserine. Position 2889 is a phosphothreonine (Thr-2889). 2 stretches are compositionally biased toward low complexity: residues 2913–2932 (PPED…RDSA) and 2993–3007 (PPTR…SAPA). A Phosphoserine modification is found at Ser-2918. Phosphoserine is present on residues Ser-3116, Ser-3117, Ser-3122, Ser-3127, and Ser-3135. At Arg-3149 the chain carries Omega-N-methylarginine. 5 disordered regions span residues 3243-3266 (PKLS…SHEN), 3352-3383 (TQQR…SSSS), 3405-3429 (GKNS…SLEA), 3471-3514 (SEVQ…TTPV), and 3539-3566 (TPTT…EGGS). Basic and acidic residues predominate over residues 3355–3369 (RTKETNCESDRERGS). The span at 3370–3383 (KQACSPCSSQSSSS) shows a compositional bias: low complexity. Composition is skewed to low complexity over residues 3475–3503 (TNSS…ATAP) and 3539–3552 (TPTT…TSTT). Ser-3557, Ser-3663, Ser-3753, Ser-3758, Ser-3760, and Ser-3761 each carry phosphoserine. A disordered region spans residues 3738–3759 (TRRANKKAKQTGRLGSSGLGSA). Over residues 3749–3759 (GRLGSSGLGSA) the composition is skewed to low complexity. 2 disordered regions span residues 3782–3850 (EGQR…LPLL) and 3897–3951 (RESK…SSSL). The segment covering 3794–3803 (TSESSNQSET) has biased composition (polar residues). Phosphoserine is present on residues Ser-3810, Ser-3818, and Ser-3830. Polar residues predominate over residues 3817–3828 (PSPSAQDTQSIV). The residue at position 3833 (Thr-3833) is a Phosphothreonine. Composition is skewed to basic and acidic residues over residues 3836–3845 (GEKEKEEKPP) and 3897–3918 (RESK…KDEP). Phosphoserine is present on residues Ser-3909 and Ser-3922. Over residues 3919–3928 (PPLSPAPLTP) the composition is skewed to pro residues. Thr-3927 and Thr-3930 each carry phosphothreonine. Over residues 3941–3951 (EPSSMHISSSL) the composition is skewed to polar residues. In terms of domain architecture, HECT spans 4041–4377 (SPEEMKNRLY…QECSEGFGLA (337 aa)). Residue Tyr-4274 is modified to Phosphotyrosine. Catalysis depends on Cys-4344, which acts as the Glycyl thioester intermediate.

The protein belongs to the UPL family. TOM1/PTR1 subfamily. In terms of assembly, interacts with isoform p19ARF of CDKN2A which strongly inhibits HUWE1 ubiquitin ligase activity. Interacts with MYCN, POLB and CDC6. Interacts with PA2G4. Interacts with NR1D1. Interacts with AMBRA1. Interacts with HAPSTR1. Interacts with HAPSTR2. In hepatocytes, interacts with PAQR3; the interaction promotes PPARA poylubiquitination and STUB1-mediated degradation. Post-translationally, phosphorylated on tyrosine; phosphorylation is probably required for its ability to inhibit TP53 transactivation. In terms of tissue distribution, widely expressed.

The protein localises to the cytoplasm. The protein resides in the nucleus. It is found in the mitochondrion. The enzyme catalyses S-ubiquitinyl-[E2 ubiquitin-conjugating enzyme]-L-cysteine + [acceptor protein]-L-lysine = [E2 ubiquitin-conjugating enzyme]-L-cysteine + N(6)-ubiquitinyl-[acceptor protein]-L-lysine.. The protein operates within protein modification; protein ubiquitination. Its function is as follows. E3 ubiquitin-protein ligase which mediates ubiquitination and subsequent proteasomal degradation of target proteins. Regulates apoptosis by catalyzing the polyubiquitination and degradation of MCL1. Mediates monoubiquitination of DNA polymerase beta (POLB) at 'Lys-41', 'Lys-61' and 'Lys-81', thereby playing a role in base-excision repair. Also ubiquitinates the p53/TP53 tumor suppressor and core histones including H1, H2A, H2B, H3 and H4. Ubiquitinates MFN2 to negatively regulate mitochondrial fusion in response to decreased stearoylation of TFRC. Ubiquitination of MFN2 also takes place following induction of mitophagy; AMBRA1 acts as a cofactor for HUWE1-mediated ubiquitination. Regulates neural differentiation and proliferation by catalyzing the polyubiquitination and degradation of MYCN. May regulate abundance of CDC6 after DNA damage by polyubiquitinating and targeting CDC6 to degradation. Mediates polyubiquitination of PA2G4. Acts in concert with MYCBP2 to regulate the circadian clock gene expression by promoting the lithium-induced ubiquination and degradation of NR1D1. Binds to an upstream initiator-like sequence in the preprodynorphin gene. Mediates HAPSTR1 degradation, but is also a required cofactor in the pathway by which HAPSTR1 governs stress signaling. Acts as a regulator of the JNK and NF-kappa-B signaling pathways by mediating assembly of heterotypic 'Lys-63'-/'Lys-48'-linked branched ubiquitin chains that are then recognized by TAB2: HUWE1 mediates branching of 'Lys-48'-linked chains of substrates initially modified with 'Lys-63'-linked conjugates by TRAF6. 'Lys-63'-/'Lys-48'-linked branched ubiquitin chains protect 'Lys-63'-linkages from CYLD deubiquitination. Ubiquitinates PPARA in hepatocytes. The sequence is that of E3 ubiquitin-protein ligase HUWE1 (Huwe1) from Mus musculus (Mouse).